A 345-amino-acid chain; its full sequence is Isocitrate lyase (345 aa).

58 to 60 (SGY) is a substrate binding site. Residue D98 coordinates Mg(2+). C135 functions as the Proton acceptor in the catalytic mechanism. Substrate is bound by residues 136–137 (GH), R170, 230–234 (NYSSS), and T260. The tract at residues 318-345 (DPEARRRIEESEGFSEEQADPITSNDDD) is disordered. Over residues 328-345 (SEGFSEEQADPITSNDDD) the composition is skewed to acidic residues.

Homotetramer or homotrimer. Mg(2+) is required as a cofactor.

It carries out the reaction D-threo-isocitrate = glyoxylate + succinate. It participates in carbohydrate metabolism; glyoxylate cycle; (S)-malate from isocitrate: step 1/2. Its function is as follows. Involved in the metabolic adaptation in response to environmental changes. Catalyzes the reversible formation of succinate and glyoxylate from isocitrate, a key step of the glyoxylate cycle, which operates as an anaplerotic route for replenishing the tricarboxylic acid cycle during growth on fatty acid substrates. This Haloferax volcanii (strain ATCC 29605 / DSM 3757 / JCM 8879 / NBRC 14742 / NCIMB 2012 / VKM B-1768 / DS2) (Halobacterium volcanii) protein is Isocitrate lyase (aceA).